Here is a 407-residue protein sequence, read N- to C-terminus: D-galactonate dehydratase family member Pjdr2_1176 (407 aa).

Aspartate 208 contacts Mg(2+). Position 210 (histidine 210) interacts with D-arabinonate. Residues glutamate 234 and glutamate 260 each coordinate Mg(2+). Residues glutamate 260, arginine 281, and glutamate 337 each coordinate D-arabinonate.

Belongs to the mandelate racemase/muconate lactonizing enzyme family. GalD subfamily.

In terms of biological role, has no detectable activity with D-mannonate and with a panel of 70 other acid sugars (in vitro), in spite of the conservation of the residues that are expected to be important for catalytic activity and cofactor binding. May have evolved a divergent function. The polypeptide is D-galactonate dehydratase family member Pjdr2_1176 (Paenibacillus sp. (strain JDR-2)).